The sequence spans 338 residues: Ketol-acid reductoisomerase (NADP(+)) (338 aa).

Residues 1–181 (MQVYYDKDCD…GGGRTGIIET (181 aa)) form the KARI N-terminal Rossmann domain. NADP(+) contacts are provided by residues 24–27 (YGSQ), arginine 47, serine 50, serine 52, and 82–85 (DEFQ). The active site involves histidine 107. Residue glycine 133 participates in NADP(+) binding. The KARI C-terminal knotted domain occupies 182–327 (TFKDETETDL…EKLRSMMPWI (146 aa)). Mg(2+) is bound by residues aspartate 190, glutamate 194, glutamate 226, and glutamate 230. A substrate-binding site is contributed by serine 251.

It belongs to the ketol-acid reductoisomerase family. It depends on Mg(2+) as a cofactor.

The catalysed reaction is (2R)-2,3-dihydroxy-3-methylbutanoate + NADP(+) = (2S)-2-acetolactate + NADPH + H(+). It carries out the reaction (2R,3R)-2,3-dihydroxy-3-methylpentanoate + NADP(+) = (S)-2-ethyl-2-hydroxy-3-oxobutanoate + NADPH + H(+). Its pathway is amino-acid biosynthesis; L-isoleucine biosynthesis; L-isoleucine from 2-oxobutanoate: step 2/4. The protein operates within amino-acid biosynthesis; L-valine biosynthesis; L-valine from pyruvate: step 2/4. Functionally, involved in the biosynthesis of branched-chain amino acids (BCAA). Catalyzes an alkyl-migration followed by a ketol-acid reduction of (S)-2-acetolactate (S2AL) to yield (R)-2,3-dihydroxy-isovalerate. In the isomerase reaction, S2AL is rearranged via a Mg-dependent methyl migration to produce 3-hydroxy-3-methyl-2-ketobutyrate (HMKB). In the reductase reaction, this 2-ketoacid undergoes a metal-dependent reduction by NADPH to yield (R)-2,3-dihydroxy-isovalerate. The chain is Ketol-acid reductoisomerase (NADP(+)) from Hahella chejuensis (strain KCTC 2396).